We begin with the raw amino-acid sequence, 89 residues long: Small ribosomal subunit protein uS15 (89 aa).

This sequence belongs to the universal ribosomal protein uS15 family. As to quaternary structure, part of the 30S ribosomal subunit. Forms a bridge to the 50S subunit in the 70S ribosome, contacting the 23S rRNA.

Functionally, one of the primary rRNA binding proteins, it binds directly to 16S rRNA where it helps nucleate assembly of the platform of the 30S subunit by binding and bridging several RNA helices of the 16S rRNA. In terms of biological role, forms an intersubunit bridge (bridge B4) with the 23S rRNA of the 50S subunit in the ribosome. The sequence is that of Small ribosomal subunit protein uS15 from Ectopseudomonas mendocina (strain ymp) (Pseudomonas mendocina).